The chain runs to 318 residues: Aspartate carbamoyltransferase catalytic subunit (318 aa).

Carbamoyl phosphate is bound by residues Arg-64 and Thr-65. Lys-92 is an L-aspartate binding site. Residues Arg-114, His-142, and Gln-145 each coordinate carbamoyl phosphate. L-aspartate is bound by residues Arg-176 and Arg-230. Residues Gly-271 and Pro-272 each coordinate carbamoyl phosphate.

Belongs to the aspartate/ornithine carbamoyltransferase superfamily. ATCase family. Heterododecamer (2C3:3R2) of six catalytic PyrB chains organized as two trimers (C3), and six regulatory PyrI chains organized as three dimers (R2).

It catalyses the reaction carbamoyl phosphate + L-aspartate = N-carbamoyl-L-aspartate + phosphate + H(+). It functions in the pathway pyrimidine metabolism; UMP biosynthesis via de novo pathway; (S)-dihydroorotate from bicarbonate: step 2/3. In terms of biological role, catalyzes the condensation of carbamoyl phosphate and aspartate to form carbamoyl aspartate and inorganic phosphate, the committed step in the de novo pyrimidine nucleotide biosynthesis pathway. The sequence is that of Aspartate carbamoyltransferase catalytic subunit from Desulfovibrio desulfuricans (strain ATCC 27774 / DSM 6949 / MB).